The primary structure comprises 379 residues: S-(hydroxymethyl)glutathione dehydrogenase (379 aa).

C47 is a Zn(2+) binding site. H48 is an NAD(+) binding site. Residues H69, E70, C99, C102, C105, C113, and C176 each contribute to the Zn(2+) site. NAD(+)-binding positions include 201–206 (GAGCIG), D225, and 296–298 (IGV).

Belongs to the zinc-containing alcohol dehydrogenase family. Class-III subfamily. Zn(2+) is required as a cofactor.

The catalysed reaction is a primary alcohol + NAD(+) = an aldehyde + NADH + H(+). The enzyme catalyses a secondary alcohol + NAD(+) = a ketone + NADH + H(+). It catalyses the reaction S-(hydroxymethyl)glutathione + NADP(+) = S-formylglutathione + NADPH + H(+). It carries out the reaction S-(hydroxymethyl)glutathione + NAD(+) = S-formylglutathione + NADH + H(+). The catalysed reaction is S-nitrosoglutathione + NADH + H(+) = S-(hydroxysulfenamide)glutathione + NAD(+). Functionally, oxidizes long-chain alcohols and, in the presence of glutathione, is able to oxidize formaldehyde. Also acts as a S-nitroso-glutathione reductase by catalyzing the NADH-dependent reduction of S-nitrosoglutathione, thereby regulating protein S-nitrosylation. The protein is S-(hydroxymethyl)glutathione dehydrogenase (FLD1) of Komagataella pastoris (Yeast).